The following is a 150-amino-acid chain: Galactose-binding lectin (150 aa).

The D-galactose site is built by His16 and Gly19. Residue Asn26 is glycosylated (N-linked (GlcNAc...) asparagine). Residues Asp27, 35–37 (DIH), His64, and Gly67 each bind D-galactose. An N-linked (GlcNAc...) asparagine glycan is attached at Asn74. D-galactose is bound by residues Glu75, 83–85 (DRH), His108, and Gly111. A glycan (N-linked (GlcNAc...) asparagine) is linked at Asn118. D-galactose-binding positions include Glu119 and 127–129 (DKH).

As to quaternary structure, homodimer. Likely to form large oligomers; oligomerization enhances hemagglutination activity. In terms of processing, glycosylated.

Hemagglutination activity is not dependent on divalent cations. Hemagglutination activity is highly inhibited by D-galactose and N-acetyl-D-galactosamine, and to a lesser extent by raffinose. Also inhibited by melibiose and alpha-lactose, but not by beta-lactose or D-glucose. D-galactose-binding lectin. Also binds N-acetyl-D-galactosamine. Has hemagglutination activity towards all types of human erythrocytes (O, A and B) and rabbit erythrocytes. Agglutinates Gram-negative and Gram-positive bacteria including E.coli DH5-alpha and L.plantarum ATCC8014, respectively, and has bacteriostatic activity against them. Also agglutinates M.lysodeikticus. May be involved in innate immunity by recognizing and eliminating pathogens. In Mytilus californianus (California mussel), this protein is Galactose-binding lectin.